Reading from the N-terminus, the 445-residue chain is Squalene synthase (445 aa).

2 consecutive transmembrane segments (helical) span residues 291 to 311 and 405 to 425; these read STFT…DLVY and LIVC…IAYV.

This sequence belongs to the phytoene/squalene synthase family. The cofactor is Mg(2+).

Its subcellular location is the endoplasmic reticulum membrane. It carries out the reaction 2 (2E,6E)-farnesyl diphosphate + NADPH + H(+) = squalene + 2 diphosphate + NADP(+). The enzyme catalyses 2 (2E,6E)-farnesyl diphosphate + NADH + H(+) = squalene + 2 diphosphate + NAD(+). It participates in terpene metabolism; lanosterol biosynthesis; lanosterol from farnesyl diphosphate: step 1/3. In terms of biological role, catalyzes the condensation of 2 two farnesyl pyrophosphate moieties to form squalene. It is the first committed enzyme of the sterol biosynthesis pathway. Required for the biosynthesis of ergosterol. In Yarrowia lipolytica (strain CLIB 122 / E 150) (Yeast), this protein is Squalene synthase (SQS1).